The chain runs to 35 residues: Beta/omega-theraphotoxin-Bp1a (35 aa).

Disulfide bonds link C2-C16, C9-C21, and C15-C28.

The protein belongs to the neurotoxin 10 (Hwtx-1) family. 54 (ProTx-1) subfamily. In terms of processing, an unnatural amidation at Ser-35 provokes a 14-fold increased toxin ability to inhibit Nav1.2/SCN2A and a ~2-fold decreased toxin ability to inhibit both Nav1.5/SCN5A and Nav1.7/SCN9A. As to expression, expressed by the venom gland.

It is found in the secreted. Its function is as follows. Ion channel impairing toxin that inhibits voltage-gated calcium channel Cav3.1/CACNA1G (IC(50)=53 nM), voltage-gated potassium channels Kv2.1/KCNB1 (IC(50)=411 nM), all sodium channels tested (Nav1.2/SCN2A (IC(50)=60-104 nM), Nav1.5/SCN5A (IC(50)=76-358 nM), Nav1.6/SCN8A (IC(50)=21-133 nM), Nav1.7/SCN9A (IC(50)=51-95 nM), and Nav1.8/SCN10A) as well as the nociceptor cation channel TRPA1 (IC(50)=389 nM). Acts as a potent and selective blocker of voltage-gated calcium channel Cav3.1/CACNA1G, but not of Cav3.2/CACNA1H, and Cav3.3/CACNA1I. On Nav1.7/SCN9A, primarily interacts with the DII and DIV voltage-sensor domains. Also acts as an inhibitor of nociceptor cation channel TRPA1 (IC(50)~389 nM) by binding to the S1-S4 gating domain of TRPA1. It shows moderate affinity for lipid bilayers. The chain is Beta/omega-theraphotoxin-Bp1a from Bumba pulcherrimaklaasi (Tarantula spider).